The following is a 106-amino-acid chain: MPFLDIQKRFGLNIDRWWTIQSAEQPYKLAPRCHAFEKEWIECAHGIGAIRAEKECKIEYDDFIECLLRQKTMRRVNAIRRQRDKLIKEGKYTPPPHHIGKGEPRP.

The CHCH domain maps to 30-74 (APRCHAFEKEWIECAHGIGAIRAEKECKIEYDDFIECLLRQKTMR). 2 short sequence motifs (cx9C motif) span residues 33-43 (CHAFEKEWIEC) and 56-66 (CKIEYDDFIEC). 2 cysteine pairs are disulfide-bonded: cysteine 33/cysteine 66 and cysteine 43/cysteine 56. The tract at residues 87-106 (IKEGKYTPPPHHIGKGEPRP) is disordered.

It belongs to the complex I NDUFS5 subunit family. As to quaternary structure, mammalian complex I is composed of 45 different subunits. This is a component of the iron-sulfur (IP) fragment of the enzyme.

It localises to the mitochondrion inner membrane. The protein resides in the mitochondrion intermembrane space. Its function is as follows. Accessory subunit of the mitochondrial membrane respiratory chain NADH dehydrogenase (Complex I), that is believed not to be involved in catalysis. Complex I functions in the transfer of electrons from NADH to the respiratory chain. The immediate electron acceptor for the enzyme is believed to be ubiquinone. The chain is NADH dehydrogenase [ubiquinone] iron-sulfur protein 5 (NDUFS5) from Macaca fascicularis (Crab-eating macaque).